The following is a 358-amino-acid chain: Peptide chain release factor 2 (358 aa).

The residue at position 242 (Gln242) is an N5-methylglutamine.

This sequence belongs to the prokaryotic/mitochondrial release factor family. Post-translationally, methylated by PrmC. Methylation increases the termination efficiency of RF2.

Its subcellular location is the cytoplasm. Peptide chain release factor 2 directs the termination of translation in response to the peptide chain termination codons UGA and UAA. The chain is Peptide chain release factor 2 (prfB) from Borreliella burgdorferi (strain ATCC 35210 / DSM 4680 / CIP 102532 / B31) (Borrelia burgdorferi).